The primary structure comprises 502 residues: Mannitol dehydrogenase 2 (502 aa).

Belongs to the mannitol dehydrogenase family.

The catalysed reaction is D-mannitol + NAD(+) = D-fructose + NADH + H(+). Its function is as follows. Catalyzes the NAD(H)-dependent interconversion of D-fructose and D-mannitol in the mannitol metabolic pathway. This chain is Mannitol dehydrogenase 2, found in Saccharomyces cerevisiae (strain ATCC 204508 / S288c) (Baker's yeast).